The primary structure comprises 60 residues: Large ribosomal subunit protein bL32 (60 aa).

Residues 1 to 60 (MAVQQNKKTPSKRGMHRSHDFLVAPQLSVEPTTGETHMRHHISPNGFYRGRKVLKTKNDE) form a disordered region. Residues 49–60 (RGRKVLKTKNDE) are compositionally biased toward basic residues.

This sequence belongs to the bacterial ribosomal protein bL32 family.

The sequence is that of Large ribosomal subunit protein bL32 from Janthinobacterium sp. (strain Marseille) (Minibacterium massiliensis).